The primary structure comprises 511 residues: Glucans biosynthesis protein G (511 aa).

The N-terminal stretch at methionine 1 to alanine 22 is a signal peptide.

This sequence belongs to the OpgD/OpgG family.

Its subcellular location is the periplasm. Its pathway is glycan metabolism; osmoregulated periplasmic glucan (OPG) biosynthesis. Its function is as follows. Involved in the biosynthesis of osmoregulated periplasmic glucans (OPGs). This is Glucans biosynthesis protein G from Escherichia coli O81 (strain ED1a).